A 153-amino-acid chain; its full sequence is Endoribonuclease YbeY (153 aa).

Zn(2+) is bound by residues His118, His122, and His128.

This sequence belongs to the endoribonuclease YbeY family. Requires Zn(2+) as cofactor.

It is found in the cytoplasm. Its function is as follows. Single strand-specific metallo-endoribonuclease involved in late-stage 70S ribosome quality control and in maturation of the 3' terminus of the 16S rRNA. The chain is Endoribonuclease YbeY from Staphylococcus haemolyticus (strain JCSC1435).